The primary structure comprises 431 residues: Tyrosine--tRNA ligase (431 aa).

Tyrosine 33 is an L-tyrosine binding site. Positions 38–47 (PTADSLHIGS) match the 'HIGH' region motif. Residues tyrosine 172 and glutamine 176 each contribute to the L-tyrosine site. A 'KMSKS' region motif is present at residues 234 to 238 (KFGKS). Lysine 237 contributes to the ATP binding site. The S4 RNA-binding domain maps to 364–431 (INIVEVLNEK…KKNYFVLNVK (68 aa)).

This sequence belongs to the class-I aminoacyl-tRNA synthetase family. TyrS type 1 subfamily. In terms of assembly, homodimer.

It localises to the cytoplasm. It catalyses the reaction tRNA(Tyr) + L-tyrosine + ATP = L-tyrosyl-tRNA(Tyr) + AMP + diphosphate + H(+). Functionally, catalyzes the attachment of tyrosine to tRNA(Tyr) in a two-step reaction: tyrosine is first activated by ATP to form Tyr-AMP and then transferred to the acceptor end of tRNA(Tyr). The sequence is that of Tyrosine--tRNA ligase from Flavobacterium psychrophilum (strain ATCC 49511 / DSM 21280 / CIP 103535 / JIP02/86).